The following is a 95-amino-acid chain: Acylphosphatase (95 aa).

Residues 6 to 94 (RVRVIVKGIV…EDFTGFSVRY (89 aa)) enclose the Acylphosphatase-like domain. Residues Arg-21 and Asn-39 contribute to the active site.

This sequence belongs to the acylphosphatase family.

It carries out the reaction an acyl phosphate + H2O = a carboxylate + phosphate + H(+). The sequence is that of Acylphosphatase (acyP) from Caldivirga maquilingensis (strain ATCC 700844 / DSM 13496 / JCM 10307 / IC-167).